The following is a 592-amino-acid chain: Testis-specific serine kinase substrate (592 aa).

Ser-217 carries the phosphoserine modification. Residues 232-308 form a disordered region; that stretch reads QDETPRRQEA…VPAGWGMGPR (77 aa). A compositionally biased stretch (basic and acidic residues) spans 234-264; the sequence is ETPRRQEAELQEPEEKQEPEEKQEPEEKQKP. A compositionally biased stretch (polar residues) spans 269–281; it reads SWNSLGPAATSQG. Phosphoserine; by TSSK1 and TSSK2 is present on Ser-288. Ser-316 carries the phosphoserine modification. The tract at residues 566-592 is disordered; that stretch reads LEGSTGTMGGGSSAGTPPKQGGSAPEQ.

In terms of processing, phosphorylated on serine residue(s) by STK22A/TSSK1 and STK22B/TSSK2. In terms of tissue distribution, highly expressed in testis. Expressed at low levels in prostate, female breast, placenta, ovary and thymus.

It is found in the cytoplasm. Its subcellular location is the cytoskeleton. The protein localises to the microtubule organizing center. The protein resides in the centrosome. It localises to the centriole. Functionally, may play a role in testicular physiology, most probably in the process of spermatogenesis or spermatid development. The chain is Testis-specific serine kinase substrate (TSKS) from Homo sapiens (Human).